Consider the following 250-residue polypeptide: 2,3-bisphosphoglycerate-dependent phosphoglycerate mutase (250 aa).

Substrate is bound by residues 10–17 (RHGESQWN), 23–24 (TG), Arg62, 89–92 (ERHY), Lys100, 116–117 (RR), and 185–186 (GN). The active-site Tele-phosphohistidine intermediate is His11. The active-site Proton donor/acceptor is the Glu89.

It belongs to the phosphoglycerate mutase family. BPG-dependent PGAM subfamily. In terms of assembly, homodimer.

It carries out the reaction (2R)-2-phosphoglycerate = (2R)-3-phosphoglycerate. The protein operates within carbohydrate degradation; glycolysis; pyruvate from D-glyceraldehyde 3-phosphate: step 3/5. In terms of biological role, catalyzes the interconversion of 2-phosphoglycerate and 3-phosphoglycerate. This is 2,3-bisphosphoglycerate-dependent phosphoglycerate mutase from Yersinia enterocolitica serotype O:8 / biotype 1B (strain NCTC 13174 / 8081).